The primary structure comprises 156 residues: Snaclec stejaggregin-B subunit alpha (156 aa).

The signal sequence occupies residues 1–23 (MGRFISVSFGLLVVFLSLSGTGA). Cystine bridges form between cysteine 25/cysteine 36, cysteine 53/cysteine 150, and cysteine 125/cysteine 142. The C-type lectin domain occupies 32–151 (FKQYCYQIIK…CEQKHLFMCK (120 aa)).

This sequence belongs to the snaclec family. Heteromultimer; disulfide-linked. Expressed by the venom gland.

The protein localises to the secreted. In terms of biological role, interferes with one step of hemostasis (modulation of platelet aggregation, or coagulation cascade, for example). The sequence is that of Snaclec stejaggregin-B subunit alpha from Trimeresurus stejnegeri (Chinese green tree viper).